A 231-amino-acid polypeptide reads, in one-letter code: Large ribosomal subunit protein uL1 (231 aa).

Belongs to the universal ribosomal protein uL1 family. Part of the 50S ribosomal subunit.

Binds directly to 23S rRNA. The L1 stalk is quite mobile in the ribosome, and is involved in E site tRNA release. Functionally, protein L1 is also a translational repressor protein, it controls the translation of the L11 operon by binding to its mRNA. In Pseudomonas syringae pv. tomato (strain ATCC BAA-871 / DC3000), this protein is Large ribosomal subunit protein uL1.